The chain runs to 154 residues: U1 small nuclear ribonucleoprotein C (154 aa).

A Matrin-type zinc finger spans residues 4 to 36 (YYCDYCDTYLTHDSPSVRKTHCTGRKHKDNVKF).

It belongs to the U1 small nuclear ribonucleoprotein C family. As to quaternary structure, U1 snRNP is composed of the 7 core Sm proteins B/B', D1, D2, D3, E, F and G that assemble in a heptameric protein ring on the Sm site of the small nuclear RNA to form the core snRNP, and at least 3 U1 snRNP-specific proteins U1-70K, U1-A and U1-C. U1-C interacts with U1 snRNA and the 5' splice-site region of the pre-mRNA.

The protein localises to the nucleus. Component of the spliceosomal U1 snRNP, which is essential for recognition of the pre-mRNA 5' splice-site and the subsequent assembly of the spliceosome. U1-C is directly involved in initial 5' splice-site recognition for both constitutive and regulated alternative splicing. The interaction with the 5' splice-site seems to precede base-pairing between the pre-mRNA and the U1 snRNA. Stimulates commitment or early (E) complex formation by stabilizing the base pairing of the 5' end of the U1 snRNA and the 5' splice-site region. The chain is U1 small nuclear ribonucleoprotein C from Aedes aegypti (Yellowfever mosquito).